The chain runs to 481 residues: Alginate biosynthesis protein AlgA (481 aa).

It belongs to the mannose-6-phosphate isomerase type 2 family. Monomer. The cofactor is Co(2+).

It catalyses the reaction D-mannose 6-phosphate = D-fructose 6-phosphate. It carries out the reaction alpha-D-mannose 1-phosphate + GTP + H(+) = GDP-alpha-D-mannose + diphosphate. The protein operates within nucleotide-sugar biosynthesis; GDP-alpha-D-mannose biosynthesis; GDP-alpha-D-mannose from alpha-D-mannose 1-phosphate (GTP route): step 1/1. It functions in the pathway nucleotide-sugar biosynthesis; GDP-alpha-D-mannose biosynthesis; alpha-D-mannose 1-phosphate from D-fructose 6-phosphate: step 1/2. In terms of biological role, produces a precursor for alginate polymerization. The alginate layer provides a protective barrier against host immune defenses and antibiotics. This chain is Alginate biosynthesis protein AlgA (algA), found in Pseudomonas aeruginosa (strain ATCC 15692 / DSM 22644 / CIP 104116 / JCM 14847 / LMG 12228 / 1C / PRS 101 / PAO1).